Here is a 301-residue protein sequence, read N- to C-terminus: Diaminopimelate epimerase (301 aa).

Residues asparagine 15, glutamine 47, and asparagine 67 each coordinate substrate. Cysteine 76 serves as the catalytic Proton donor. Substrate contacts are provided by residues glycine 77–asparagine 78, asparagine 163, asparagine 197, and glutamate 215–arginine 216. Residue cysteine 224 is the Proton acceptor of the active site. Glycine 225 to serine 226 contacts substrate. Positions serine 280 to arginine 301 are disordered.

The protein belongs to the diaminopimelate epimerase family. As to quaternary structure, homodimer.

The protein localises to the cytoplasm. The enzyme catalyses (2S,6S)-2,6-diaminopimelate = meso-2,6-diaminopimelate. It participates in amino-acid biosynthesis; L-lysine biosynthesis via DAP pathway; DL-2,6-diaminopimelate from LL-2,6-diaminopimelate: step 1/1. In terms of biological role, catalyzes the stereoinversion of LL-2,6-diaminopimelate (L,L-DAP) to meso-diaminopimelate (meso-DAP), a precursor of L-lysine and an essential component of the bacterial peptidoglycan. The protein is Diaminopimelate epimerase of Rhizobium leguminosarum bv. trifolii (strain WSM2304).